The chain runs to 449 residues: Methylenetetrahydrofolate--tRNA-(uracil-5-)-methyltransferase TrmFO (449 aa).

9–14 is a binding site for FAD; it reads GGGIAG.

Belongs to the MnmG family. TrmFO subfamily. FAD serves as cofactor.

The protein resides in the cytoplasm. It catalyses the reaction uridine(54) in tRNA + (6R)-5,10-methylene-5,6,7,8-tetrahydrofolate + NADH + H(+) = 5-methyluridine(54) in tRNA + (6S)-5,6,7,8-tetrahydrofolate + NAD(+). The catalysed reaction is uridine(54) in tRNA + (6R)-5,10-methylene-5,6,7,8-tetrahydrofolate + NADPH + H(+) = 5-methyluridine(54) in tRNA + (6S)-5,6,7,8-tetrahydrofolate + NADP(+). In terms of biological role, catalyzes the folate-dependent formation of 5-methyl-uridine at position 54 (M-5-U54) in all tRNAs. In Gloeobacter violaceus (strain ATCC 29082 / PCC 7421), this protein is Methylenetetrahydrofolate--tRNA-(uracil-5-)-methyltransferase TrmFO.